The primary structure comprises 65 residues: Conotoxin Am6.4 (65 aa).

Positions 1-33 (STGKRNAGKLTVTDDVEADRDTDPDDKDPSVHN) are disordered. Residues 1 to 36 (STGKRNAGKLTVTDDVEADRDTDPDDKDPSVHNSWR) constitute a propeptide that is removed on maturation. Residues 14 to 26 (DDVEADRDTDPDD) are compositionally biased toward acidic residues. 3 disulfide bridges follow: Cys40-Cys50, Cys45-Cys59, and Cys49-Cys64.

Is not hydroxylated. Expressed by the venom duct.

Its subcellular location is the secreted. Probable toxin that inhibits ion channels. The chain is Conotoxin Am6.4 from Conus amadis (Amadis cone).